Here is a 184-residue protein sequence, read N- to C-terminus: Tumor necrosis factor alpha-induced protein 8-like protein 2 (184 aa).

This sequence belongs to the TNFAIP8 family. TNFAIP8L2 subfamily. In terms of assembly, may interact with CASP8; however, such result is unclear since could not reproduce the interaction with CASP8. Interacts with RAC1. In terms of processing, ubiquitinated in a BTRC-depdent manner; leading to degradation mediated through the proteasome pathway.

It localises to the cytoplasm. The protein localises to the nucleus. It is found in the lysosome. Functionally, acts as a negative regulator of innate and adaptive immunity by maintaining immune homeostasis. Plays a regulatory role in the Toll-like signaling pathway by determining the strength of LPS-induced signaling and gene expression. Inhibits TCR-mediated T-cell activation and negatively regulate T-cell function to prevent hyperresponsiveness. Also inhibits autolysosome formation via negatively modulating MTOR activation by interacting with RAC1 and promoting the disassociation of the RAC1-MTOR complex. Plays an essential role in NK-cell biology by acting as a checkpoint and displaying an expression pattern correlating with NK-cell maturation process and by negatively regulating NK-cell maturation and antitumor immunity. Mechanistically, suppresses IL-15-triggered mTOR activity in NK-cells. The protein is Tumor necrosis factor alpha-induced protein 8-like protein 2 (TNFAIP8L2) of Rhinolophus ferrumequinum (Greater horseshoe bat).